A 224-amino-acid polypeptide reads, in one-letter code: Beta-casein (224 aa).

A signal peptide spans 1–15; the sequence is MKVLILACLVALALA. Phosphoserine is present on residues Ser-30, Ser-32, Ser-33, and Ser-34.

It belongs to the beta-casein family. Mammary gland specific. Secreted in milk.

The protein localises to the secreted. Its function is as follows. Important role in determination of the surface properties of the casein micelles. This chain is Beta-casein (CSN2), found in Bubalus bubalis (Domestic water buffalo).